Here is a 227-residue protein sequence, read N- to C-terminus: Ornithine decarboxylase antizyme 1 (227 aa).

Positions 20 to 50 (EGDKPSATVHATRTMPLLSLHSRGGRSSESS) are disordered. Low complexity predominate over residues 36–50 (LLSLHSRGGRSSESS).

The protein belongs to the ODC antizyme family. In terms of assembly, interacts with ODC1 and thereby sterically blocks ODC homodimerization. Forms a ternary complex with PSMB4 and OAZ1 before PSMB4 is incorporated into the 20S proteasome. Interacts with AZIN2; this interaction disrupts the interaction between the antizyme and ODC1. Interacts with FAM171A1.

Ornithine decarboxylase (ODC) antizyme protein that negatively regulates ODC activity and intracellular polyamine biosynthesis and uptake in response to increased intracellular polyamine levels. Binds to ODC monomers, inhibiting the assembly of the functional ODC homodimer, and targets the monomers for ubiquitin-independent proteolytic destruction by the 26S proteasome. Triggers ODC degradation by inducing the exposure of a cryptic proteasome-interacting surface of ODC. Stabilizes AZIN2 by interfering with its ubiquitination. Also inhibits cellular uptake of polyamines by inactivating the polyamine uptake transporter. SMAD1/OAZ1/PSMB4 complex mediates the degradation of the CREBBP/EP300 repressor SNIP1. Involved in the translocation of AZIN2 from ER-Golgi intermediate compartment (ERGIC) to the cytosol. In Bos taurus (Bovine), this protein is Ornithine decarboxylase antizyme 1 (OAZ1).